Consider the following 460-residue polypeptide: Chromosomal replication initiator protein DnaA 2 (460 aa).

The segment at 1-68 is domain I, interacts with DnaA modulators; the sequence is MRAWEDFLLL…KTSLVNNNGK (68 aa). Positions 68–102 are domain II; the sequence is KLIRVHITSLDKTAPFYKEKQIQQEKTAYFTMQYG. The tract at residues 103–321 is domain III, AAA+ region; that stretch reads NVNPEMTFGN…DALKLLSKRV (219 aa). ATP contacts are provided by Gly151, Gly153, Lys154, and Thr155. Residues 322–460 form a domain IV, binds dsDNA region; it reads AYKKLAQQLL…EFFPEEEISC (139 aa).

The protein belongs to the DnaA family. Oligomerizes as a right-handed, spiral filament on DNA at oriC.

It is found in the cytoplasm. Its function is as follows. Plays an essential role in the initiation and regulation of chromosomal replication. ATP-DnaA binds to the origin of replication (oriC) to initiate formation of the DNA replication initiation complex once per cell cycle. Binds the DnaA box (a 9 base pair repeat at the origin) and separates the double-stranded (ds)DNA. Forms a right-handed helical filament on oriC DNA; dsDNA binds to the exterior of the filament while single-stranded (ss)DNA is stabiized in the filament's interior. The ATP-DnaA-oriC complex binds and stabilizes one strand of the AT-rich DNA unwinding element (DUE), permitting loading of DNA polymerase. After initiation quickly degrades to an ADP-DnaA complex that is not apt for DNA replication. Binds acidic phospholipids. This is Chromosomal replication initiator protein DnaA 2 from Chlamydia caviae (strain ATCC VR-813 / DSM 19441 / 03DC25 / GPIC) (Chlamydophila caviae).